We begin with the raw amino-acid sequence, 357 residues long: Phosphoribosylformylglycinamidine cyclo-ligase (357 aa).

This sequence belongs to the AIR synthase family.

The protein localises to the cytoplasm. It carries out the reaction 2-formamido-N(1)-(5-O-phospho-beta-D-ribosyl)acetamidine + ATP = 5-amino-1-(5-phospho-beta-D-ribosyl)imidazole + ADP + phosphate + H(+). It participates in purine metabolism; IMP biosynthesis via de novo pathway; 5-amino-1-(5-phospho-D-ribosyl)imidazole from N(2)-formyl-N(1)-(5-phospho-D-ribosyl)glycinamide: step 2/2. This is Phosphoribosylformylglycinamidine cyclo-ligase from Rhodopseudomonas palustris (strain ATCC BAA-98 / CGA009).